The following is a 101-amino-acid chain: Urease subunit beta (101 aa).

The protein belongs to the urease beta subunit family. In terms of assembly, heterotrimer of UreA (gamma), UreB (beta) and UreC (alpha) subunits. Three heterotrimers associate to form the active enzyme.

It is found in the cytoplasm. It carries out the reaction urea + 2 H2O + H(+) = hydrogencarbonate + 2 NH4(+). It functions in the pathway nitrogen metabolism; urea degradation; CO(2) and NH(3) from urea (urease route): step 1/1. The polypeptide is Urease subunit beta (Leptothrix cholodnii (strain ATCC 51168 / LMG 8142 / SP-6) (Leptothrix discophora (strain SP-6))).